Reading from the N-terminus, the 142-residue chain is Mitochondrial import receptor subunit TOM22 homolog (142 aa).

Residues 1–11 (MAAAVAAAGAG) show a composition bias toward low complexity. The interval 1 to 40 (MAAAVAAAGAGEPLSPEELVPKAEAEKAEEDLEEDDDDEL) is disordered. Residue Ala2 is modified to N-acetylalanine. Residues 2–82 (AAAVAAAGAG…VAQKMYRFSR (81 aa)) lie on the Cytoplasmic side of the membrane. Ser15 carries the phosphoserine modification. Residues 27–40 (KAEEDLEEDDDDEL) show a composition bias toward acidic residues. The import sequence; necessary for mitochondrion outer membrane localization and integration in the TOM complex stretch occupies residues 41-50 (DETLSERLWG). Thr43 carries the post-translational modification Phosphothreonine. A Phosphoserine modification is found at Ser45. A helical membrane pass occupies residues 83–103 (AALWIGTTSFMILVLPVVFET). The tract at residues 83–103 (AALWIGTTSFMILVLPVVFET) is TMD; necessary for mitochondrion outer membrane localization and integration in the TOM complex. The Mitochondrial intermembrane segment spans residues 104–142 (EKLQMEQQQQLQQRQILLGPNTGLSGGMPGALPPLPGKI). Positions 123-142 (PNTGLSGGMPGALPPLPGKI) are C-tail signal; necessary for mitochondrion outer membrane localization and integration in the TOM complex.

It belongs to the Tom22 family. Forms part of the preprotein translocase complex of the outer mitochondrial membrane (TOM complex) which consists of at least 7 different proteins (TOMM5, TOMM6, TOMM7, TOMM20, TOMM22, TOMM40 and TOMM70). Interacts with TOMM40. Interacts with PPP2R2B.

Its subcellular location is the mitochondrion outer membrane. In terms of biological role, central receptor component of the translocase of the outer membrane of mitochondria (TOM complex) responsible for the recognition and translocation of cytosolically synthesized mitochondrial preproteins. Together with the peripheral receptor TOM20 functions as the transit peptide receptor and facilitates the movement of preproteins into the translocation pore. Required for the translocation across the mitochondrial outer membrane of cytochrome P450 monooxygenases. This chain is Mitochondrial import receptor subunit TOM22 homolog (Tomm22), found in Rattus norvegicus (Rat).